The following is a 186-amino-acid chain: MAAEDPPVSGVSGRYATALFELARDEKSVDAVKADLDKFNALLDESADLKRLVRSPVFGADVQLKALNAVLDKAGIAGVAANVLRVLTANRRLFAVADVIRAFNALVAKYKGEATADVTVAEPLSDKNLDALKASLKTVTGKDVALNVKVDPAIIGGLVVKLGSRMIDSSLRTKLNSIKHAMKEAG.

Belongs to the ATPase delta chain family. In terms of assembly, F-type ATPases have 2 components, F(1) - the catalytic core - and F(0) - the membrane proton channel. F(1) has five subunits: alpha(3), beta(3), gamma(1), delta(1), epsilon(1). CF(0) has four main subunits: a(1), b(1), b'(1) and c(10-14). The alpha and beta chains form an alternating ring which encloses part of the gamma chain. F(1) is attached to F(0) by a central stalk formed by the gamma and epsilon chains, while a peripheral stalk is formed by the delta, b and b' chains.

The protein localises to the cell inner membrane. F(1)F(0) ATP synthase produces ATP from ADP in the presence of a proton or sodium gradient. F-type ATPases consist of two structural domains, F(1) containing the extramembraneous catalytic core and F(0) containing the membrane proton channel, linked together by a central stalk and a peripheral stalk. During catalysis, ATP synthesis in the catalytic domain of F(1) is coupled via a rotary mechanism of the central stalk subunits to proton translocation. Functionally, this protein is part of the stalk that links CF(0) to CF(1). It either transmits conformational changes from CF(0) to CF(1) or is implicated in proton conduction. This Bradyrhizobium sp. (strain BTAi1 / ATCC BAA-1182) protein is ATP synthase subunit delta.